A 422-amino-acid polypeptide reads, in one-letter code: Glutamate-1-semialdehyde 2,1-aminomutase (422 aa).

At K264 the chain carries N6-(pyridoxal phosphate)lysine.

It belongs to the class-III pyridoxal-phosphate-dependent aminotransferase family. HemL subfamily. In terms of assembly, homodimer. The cofactor is pyridoxal 5'-phosphate.

The protein resides in the cytoplasm. It catalyses the reaction (S)-4-amino-5-oxopentanoate = 5-aminolevulinate. Its pathway is porphyrin-containing compound metabolism; protoporphyrin-IX biosynthesis; 5-aminolevulinate from L-glutamyl-tRNA(Glu): step 2/2. This is Glutamate-1-semialdehyde 2,1-aminomutase from Clostridium acetobutylicum (strain ATCC 824 / DSM 792 / JCM 1419 / IAM 19013 / LMG 5710 / NBRC 13948 / NRRL B-527 / VKM B-1787 / 2291 / W).